We begin with the raw amino-acid sequence, 183 residues long: DNA-directed RNA polymerase subunit Rpo7 (183 aa).

Residues 82 to 164 (HEVIEGEVSQ…RLPRIALTMK (83 aa)) enclose the S1 motif domain.

Belongs to the eukaryotic RPB7/RPC8 RNA polymerase subunit family. Part of the 13-subunit RNA polymerase complex. Forms a stalk with Rpo4 that extends from the main structure.

It is found in the cytoplasm. The enzyme catalyses RNA(n) + a ribonucleoside 5'-triphosphate = RNA(n+1) + diphosphate. In terms of biological role, DNA-dependent RNA polymerase (RNAP) catalyzes the transcription of DNA into RNA using the four ribonucleoside triphosphates as substrates. Functionally, reconstitution experiments show this subunit is required for basic activity. In Sulfolobus acidocaldarius (strain ATCC 33909 / DSM 639 / JCM 8929 / NBRC 15157 / NCIMB 11770), this protein is DNA-directed RNA polymerase subunit Rpo7.